A 423-amino-acid chain; its full sequence is Dihydroorotase (423 aa).

The Zn(2+) site is built by His-60 and His-62. Substrate is bound by residues 62-64 (HFR) and Asn-94. Zn(2+)-binding residues include Asp-151, His-178, and His-231. Asn-277 contacts substrate. Asp-304 lines the Zn(2+) pocket. The active site involves Asp-304. His-308 is a binding site for substrate.

Belongs to the metallo-dependent hydrolases superfamily. DHOase family. Class I DHOase subfamily. Requires Zn(2+) as cofactor.

It catalyses the reaction (S)-dihydroorotate + H2O = N-carbamoyl-L-aspartate + H(+). It functions in the pathway pyrimidine metabolism; UMP biosynthesis via de novo pathway; (S)-dihydroorotate from bicarbonate: step 3/3. In terms of biological role, catalyzes the reversible cyclization of carbamoyl aspartate to dihydroorotate. This Lactococcus lactis subsp. lactis (strain IL1403) (Streptococcus lactis) protein is Dihydroorotase.